We begin with the raw amino-acid sequence, 354 residues long: Large ribosomal subunit protein uL10 (354 aa).

Acidic residues-rich tracts occupy residues 286 to 296 (DEEALPEELQD) and 307 to 345 (AEAD…DGDG). The disordered stretch occupies residues 286–354 (DEEALPEELQ…GGDALGDMFG (69 aa)).

This sequence belongs to the universal ribosomal protein uL10 family. As to quaternary structure, part of the 50S ribosomal subunit. Forms part of the ribosomal stalk which helps the ribosome interact with GTP-bound translation factors. Forms a heptameric L10(L12)2(L12)2(L12)2 complex, where L10 forms an elongated spine to which the L12 dimers bind in a sequential fashion.

Functionally, forms part of the ribosomal stalk, playing a central role in the interaction of the ribosome with GTP-bound translation factors. This is Large ribosomal subunit protein uL10 from Natronomonas pharaonis (strain ATCC 35678 / DSM 2160 / CIP 103997 / JCM 8858 / NBRC 14720 / NCIMB 2260 / Gabara) (Halobacterium pharaonis).